The primary structure comprises 180 residues: Hypoxanthine-guanine phosphoribosyltransferase (180 aa).

Positions 43 and 44 each coordinate diphosphate. Residues glutamate 99 and aspartate 100 each contribute to the Mg(2+) site. Aspartate 103 functions as the Proton acceptor in the catalytic mechanism. GMP contacts are provided by residues lysine 131, phenylalanine 152–isoleucine 153, and aspartate 159. Residue arginine 165 participates in diphosphate binding.

This sequence belongs to the purine/pyrimidine phosphoribosyltransferase family. Mg(2+) is required as a cofactor.

The protein resides in the cytoplasm. It carries out the reaction IMP + diphosphate = hypoxanthine + 5-phospho-alpha-D-ribose 1-diphosphate. The enzyme catalyses GMP + diphosphate = guanine + 5-phospho-alpha-D-ribose 1-diphosphate. It functions in the pathway purine metabolism; IMP biosynthesis via salvage pathway; IMP from hypoxanthine: step 1/1. The protein operates within purine metabolism; GMP biosynthesis via salvage pathway; GMP from guanine: step 1/1. Functionally, purine salvage pathway enzyme that catalyzes the transfer of the ribosyl-5-phosphate group from 5-phospho-alpha-D-ribose 1-diphosphate (PRPP) to the N9 position of the 6-oxopurines hypoxanthine and guanine to form the corresponding ribonucleotides IMP (inosine 5'-monophosphate) and GMP (guanosine 5'-monophosphate), with the release of PPi. The protein is Hypoxanthine-guanine phosphoribosyltransferase (hpt) of Streptococcus pyogenes serotype M3 (strain ATCC BAA-595 / MGAS315).